Here is a 230-residue protein sequence, read N- to C-terminus: Protein UPS2, mitochondrial (230 aa).

The 175-residue stretch at 1 to 175 folds into the PRELI/MSF1 domain; that stretch reads MKLFQNSYDF…VLQVFSENWE (175 aa).

This sequence belongs to the slowmo family. Interacts with MDM35.

It is found in the mitochondrion inner membrane. The protein resides in the mitochondrion intermembrane space. In terms of biological role, required for mitochondrial cristae morphogenesis and MGM1-processing. Controls the stability of mitochondrial phosphatidylethanolamine (PE). With UPS1, controls the level of cardiolipin in mitochondria. Cardiolipin is a unique phospholipid with four fatty acid chains and is present mainly in the mitochondrial inner membrane where it stabilizes the electron transport chain supercomplex between complexes III and IV through direct interaction of their subunits. This is Protein UPS2, mitochondrial (UPS2) from Saccharomyces cerevisiae (strain ATCC 204508 / S288c) (Baker's yeast).